The following is a 230-amino-acid chain: Oxaloacetate tautomerase FAHD1, mitochondrial (230 aa).

Residues 1–26 (MAAAAAAAAQRLLAASTKIIGVGRNY) constitute a mitochondrion transit peptide. Glu-73, Glu-75, and Asp-104 together coordinate Mg(2+).

It belongs to the FAH family. Mg(2+) is required as a cofactor. The cofactor is Mn(2+).

It is found in the mitochondrion. It catalyses the reaction oxaloacetate = enol-oxaloacetate. Its function is as follows. Tautomerase that converts enol-oxaloacetate, a strong inhibitor of succinate dehydrogenase, to the physiological keto form of oxaloacetate. In Oryza sativa subsp. japonica (Rice), this protein is Oxaloacetate tautomerase FAHD1, mitochondrial.